We begin with the raw amino-acid sequence, 1003 residues long: Anoctamin-2 (1003 aa).

A disordered region spans residues 1–68 (MATPGPRDIP…PCGGESTRSS (68 aa)). At 1–365 (MATPGPRDIP…FGEKIGLYFA (365 aa)) the chain is on the cytoplasmic side. Residues 10–21 (PLLPGSPRRLSP) are compositionally biased toward low complexity. A helical transmembrane segment spans residues 366–386 (WLGLYTSFLIPSSVIGVIVFL). The Extracellular portion of the chain corresponds to 387–434 (YGCATIEEDIPSREMCDQQNAFTMCPLCDKSCDYWNLSSACGTAQASH). A glycan (N-linked (GlcNAc...) asparagine) is linked at asparagine 422. Residues 435-455 (LFDNPATVFFSIFMALWATMF) traverse the membrane as a helical segment. Residues 456 to 538 (LENWKRLQMR…KDRFPGYLMN (83 aa)) are Cytoplasmic-facing. The chain crosses the membrane as a helical span at residues 539-559 (FASILFMIALTFSIVFGVIVY). Residues 560-582 (RITTAAALSLNKATRSNVRVTVT) are Extracellular-facing. Residues 583-603 (ATAVIINLVVILILDEIYGAV) traverse the membrane as a helical segment. Topologically, residues 604-623 (AKWLTKIEVPKTEQTFEERL) are cytoplasmic. A helical transmembrane segment spans residues 624 to 644 (ILKAFLLKFVNAYSPIFYVAF). The Extracellular segment spans residues 645 to 748 (FKGRFVGRPG…YTGLTPEYME (104 aa)). Residues 749-769 (MIIQFGFVTLFVASFPLAPVF) traverse the membrane as a helical segment. Over 770 to 801 (ALLNNVIEVRLDAKKFVTELRRPDAVRTKDIG) the chain is Cytoplasmic. The chain crosses the membrane as a helical span at residues 802–822 (IWFDILSGIGKFSVISNAFVI). Over 823–907 (AITSDFIPRL…QYWFILSARL (85 aa)) the chain is Extracellular. N-linked (GlcNAc...) asparagine glycans are attached at residues asparagine 841, asparagine 849, and asparagine 856. Residues 908–928 (AFVIIFQNLVMFLSVLVDWMI) form a helical membrane-spanning segment. Over 929 to 1003 (PDIPTDISDQ…MSSGSQHTNV (75 aa)) the chain is Cytoplasmic. The tract at residues 961 to 1003 (MDEPALRSPGGGDRSRSRAASSAPSGQSQLGSMMSSGSQHTNV) is disordered. Residues 978-1003 (RAASSAPSGQSQLGSMMSSGSQHTNV) show a composition bias toward low complexity. Positions 1001–1003 (TNV) match the DLG4 binding (PDZ) motif.

Belongs to the anoctamin family. As to quaternary structure, homodimer. Component of a presynaptic protein complex recruited to specialized plasma membrane domains of photoreceptors. Interacts with DLG4 by its C-terminal region. Retina, especially in the photoreceptor synaptic terminals.

The protein localises to the cell membrane. It catalyses the reaction chloride(in) = chloride(out). With respect to regulation, channel activity is repressed by chloride inhibitors; strongly by niflumic acid (NFA), partially by flufenamic acid (FFA), and only slightly by meclofenamic acid (MFA), 5-Nitro-2-(3-phenylpropylamino)benzoic acid (NPPB), 4-acetamido-4'-isothiocyanato-stilben-2,2'-disulfonate (SITS), and 4,4'-diisothiocyanatostilbene-2,2'-disulfonic acid (DIDS). Calcium-activated chloride channel (CaCC) which may play a role in olfactory signal transduction. Odorant molecules bind to odor-sensing receptors (OSRs), leading to an increase in calcium entry that activates CaCC current which amplifies the depolarization of the OSR cells, ANO2 seems to be the underlying chloride channel involved in this process. May mediate light perception amplification in retina. The sequence is that of Anoctamin-2 (ANO2) from Homo sapiens (Human).